We begin with the raw amino-acid sequence, 114 residues long: T-cell leukemia/lymphoma protein 1A (114 aa).

The protein belongs to the TCL1 family. Homodimer. Interacts with AKT1, AKT2 and AKT3 (via PH domain). Interacts with PNPT1; the interaction has no effect on PNPT1 exonuclease activity. As to expression, restricted in the T-cell lineage to immature thymocytes and activated peripheral lymphocytes. Preferentially expressed early in T- and B-lymphocyte differentiation.

The protein resides in the cytoplasm. The protein localises to the nucleus. It is found in the microsome. It localises to the endoplasmic reticulum. Functionally, enhances the phosphorylation and activation of AKT1, AKT2 and AKT3. Promotes nuclear translocation of AKT1. Enhances cell proliferation, stabilizes mitochondrial membrane potential and promotes cell survival. This Homo sapiens (Human) protein is T-cell leukemia/lymphoma protein 1A (TCL1A).